We begin with the raw amino-acid sequence, 358 residues long: Aminomethyltransferase (358 aa).

The protein belongs to the GcvT family. As to quaternary structure, the glycine cleavage system is composed of four proteins: P, T, L and H.

The enzyme catalyses N(6)-[(R)-S(8)-aminomethyldihydrolipoyl]-L-lysyl-[protein] + (6S)-5,6,7,8-tetrahydrofolate = N(6)-[(R)-dihydrolipoyl]-L-lysyl-[protein] + (6R)-5,10-methylene-5,6,7,8-tetrahydrofolate + NH4(+). The glycine cleavage system catalyzes the degradation of glycine. The sequence is that of Aminomethyltransferase from Francisella tularensis subsp. tularensis (strain FSC 198).